A 589-amino-acid polypeptide reads, in one-letter code: Parathyroid hormone/parathyroid hormone-related peptide receptor (589 aa).

Residues 1-28 form the signal peptide; that stretch reads MGAARIAPGLALLLCCPVLSSAYALVDA. Over 29–188 the chain is Extracellular; sequence DDVMTKEEQI…REREVFDRLG (160 aa). Cystine bridges form between cysteine 48-cysteine 117, cysteine 108-cysteine 148, and cysteine 131-cysteine 170. The tract at residues 64–105 is disordered; that stretch reads ESDKGWASASTSGKPKKEKPSGKLHPESEEDKEVPTGSRPRG. Positions 81 to 90 are enriched in basic and acidic residues; it reads EKPSGKLHPE. Asparagine 151, asparagine 161, asparagine 166, and asparagine 176 each carry an N-linked (GlcNAc...) asparagine glycan. Residues 189-209 traverse the membrane as a helical segment; it reads MIYTVGYSVSLASLTVAVLIL. The Cytoplasmic segment spans residues 210 to 223; the sequence is AYFRRLHCTRNYIH. A helical membrane pass occupies residues 224–244; it reads MHLFLSFMLRAVSIFVKDAVL. Residues 245–294 are Extracellular-facing; the sequence is YSGTALDEAERLTEEELRAIAQAPPPPAAAAGYVGCRVAVTFFLYFLATN. The chain crosses the membrane as a helical span at residues 295–315; the sequence is YYWILVEGLYLHSLIFMAFFS. The Cytoplasmic segment spans residues 316 to 318; the sequence is EKK. A helical membrane pass occupies residues 319–339; it reads YLWGFTVFGWGLPAIFVAVWV. The Extracellular portion of the chain corresponds to 340 to 360; sequence SVRATLANTGCWDLSSGNKKW. A helical transmembrane segment spans residues 361 to 381; that stretch reads IIQVPILASIVLNFILFINIV. Over 382–404 the chain is Cytoplasmic; sequence RVLATKLRETNAGRCDTRQQYRK. The chain crosses the membrane as a helical span at residues 405 to 425; the sequence is LLKSTLVLMPLFGVHYIVFMA. At 426-439 the chain is on the extracellular side; the sequence is TPYTEVSGTLWQVQ. The chain crosses the membrane as a helical span at residues 440 to 460; it reads MHYEMLFNSFQGFFVAIIYCF. The Cytoplasmic segment spans residues 461–589; that stretch reads CNGEVQAEIK…LLQEEWETVM (129 aa). The short motif at 473-476 is the Important for interaction with G proteins element; sequence WSRW. Positions 524–549 are disordered; that stretch reads AATTNGHPPLPGHTKSGSPALQATPP. The residue at position 547 (threonine 547) is a Phosphothreonine.

It belongs to the G-protein coupled receptor 2 family. Homodimer in the absence of bound ligand. Peptide hormone binding leads to dissociation of the homodimer. Post-translationally, N-glycosylated.

The protein resides in the cell membrane. Its function is as follows. G-protein-coupled receptor for parathyroid hormone (PTH) and for parathyroid hormone-related peptide (PTHLH). Ligand binding causes a conformation change that triggers signaling via guanine nucleotide-binding proteins (G proteins) and modulates the activity of downstream effectors, such as adenylate cyclase (cAMP). PTH1R is coupled to G(s) G alpha proteins and mediates activation of adenylate cyclase activity. PTHLH dissociates from PTH1R more rapidly than PTH; as consequence, the cAMP response induced by PTHLH decays faster than the response induced by PTH. This chain is Parathyroid hormone/parathyroid hormone-related peptide receptor (PTH1R), found in Bos taurus (Bovine).